A 90-amino-acid chain; its full sequence is Small ribosomal subunit protein uS15 (90 aa).

The protein belongs to the universal ribosomal protein uS15 family. In terms of assembly, part of the 30S ribosomal subunit. Forms a bridge to the 50S subunit in the 70S ribosome, contacting the 23S rRNA.

In terms of biological role, one of the primary rRNA binding proteins, it binds directly to 16S rRNA where it helps nucleate assembly of the platform of the 30S subunit by binding and bridging several RNA helices of the 16S rRNA. Its function is as follows. Forms an intersubunit bridge (bridge B4) with the 23S rRNA of the 50S subunit in the ribosome. The sequence is that of Small ribosomal subunit protein uS15 from Helicobacter pylori (strain J99 / ATCC 700824) (Campylobacter pylori J99).